Consider the following 290-residue polypeptide: Alpha-1,2-colitosyltransferase (290 aa).

Belongs to the glycosyltransferase 11 family. It depends on Does not require a metal cofactor. as a cofactor.

The catalysed reaction is GDP-beta-L-colitose + beta-D-galactosyl-(1-&gt;3)-N-acetyl-D-glucosamine = alpha-L-colitosyl-(1-&gt;2)-beta-D-galactosyl-(1-&gt;3)-N-acetyl-D-glucosamine + GDP + H(+). It functions in the pathway bacterial outer membrane biogenesis; LPS O-antigen biosynthesis. Its activity is regulated as follows. Addition of metal ions dramatically decreases the activity to 0-40%. In terms of biological role, involved in the biosynthesis of the lipopolysaccharide (LPS) O-antigen region. Catalyzes the transfer of colitose from GDP-colitose to the galactose residue of beta-Gal-(1-&gt;3)-GlcNAc (lacto-N-biose) via an alpha1,2-linkage. Is specific for beta-Gal-(1-&gt;3)-GlcNAc, but can use GDP-L-fucose as the sugar donor with almost the same efficiency as GDP-L-colitose. The polypeptide is Alpha-1,2-colitosyltransferase (Escherichia coli).